The chain runs to 116 residues: Small ribosomal subunit protein eS24 (116 aa).

A disordered region spans residues 81–116 (IEPEHMVERHKKVLEELESESEESEESESEESEEEE). Positions 96-116 (ELESESEESEESESEESEEEE) are enriched in acidic residues.

The protein belongs to the eukaryotic ribosomal protein eS24 family.

This Methanopyrus kandleri (strain AV19 / DSM 6324 / JCM 9639 / NBRC 100938) protein is Small ribosomal subunit protein eS24.